A 307-amino-acid chain; its full sequence is 4-hydroxythreonine-4-phosphate dehydrogenase (307 aa).

The substrate site is built by histidine 126 and threonine 127. A divalent metal cation contacts are provided by histidine 156, histidine 195, and histidine 251. Substrate is bound by residues lysine 259, asparagine 268, and arginine 277.

Belongs to the PdxA family. Homodimer. It depends on Zn(2+) as a cofactor. Mg(2+) is required as a cofactor. Requires Co(2+) as cofactor.

The protein localises to the cytoplasm. The enzyme catalyses 4-(phosphooxy)-L-threonine + NAD(+) = 3-amino-2-oxopropyl phosphate + CO2 + NADH. Its pathway is cofactor biosynthesis; pyridoxine 5'-phosphate biosynthesis; pyridoxine 5'-phosphate from D-erythrose 4-phosphate: step 4/5. Its function is as follows. Catalyzes the NAD(P)-dependent oxidation of 4-(phosphooxy)-L-threonine (HTP) into 2-amino-3-oxo-4-(phosphooxy)butyric acid which spontaneously decarboxylates to form 3-amino-2-oxopropyl phosphate (AHAP). The protein is 4-hydroxythreonine-4-phosphate dehydrogenase of Helicobacter pylori (strain ATCC 700392 / 26695) (Campylobacter pylori).